Here is a 602-residue protein sequence, read N- to C-terminus: DEAD-box ATP-dependent RNA helicase 52A (602 aa).

The interval 9–31 (KSVEAGGEPGGGGGGAWSTVSRS) is disordered. A compositionally biased stretch (gly residues) spans 15-24 (GEPGGGGGGA). The Q motif signature appears at 84–112 (DGFEAAGLVEAVLRNVARCGYESPTPVQR). Residues 115 to 305 (MPIALAGRDL…SDFLSNYIFI (191 aa)) form the Helicase ATP-binding domain. 128 to 135 (AQTGSGKT) serves as a coordination point for ATP. Residues 249–252 (DEAD) carry the DEAD box motif. Residues 328-485 (EKRGYLLDLL…DVPDWLVQYA (158 aa)) enclose the Helicase C-terminal domain. Disordered stretches follow at residues 492–521 (GSSY…SGGG) and 552–602 (RGGG…SGWD). Gly residues predominate over residues 552-574 (RGGGYSRGGRGGYSGGGGGGGGD).

It belongs to the DEAD box helicase family. DDX3/DED1 subfamily.

The catalysed reaction is ATP + H2O = ADP + phosphate + H(+). The polypeptide is DEAD-box ATP-dependent RNA helicase 52A (Oryza sativa subsp. japonica (Rice)).